Reading from the N-terminus, the 133-residue chain is Large ribosomal subunit protein bL12 (133 aa).

Residues 98 to 118 form a disordered region; it reads DMVESTPKPIKEGTGKEDAED.

This sequence belongs to the bacterial ribosomal protein bL12 family. In terms of assembly, homodimer. Part of the ribosomal stalk of the 50S ribosomal subunit. Forms a multimeric L10(L12)X complex, where L10 forms an elongated spine to which 2 to 4 L12 dimers bind in a sequential fashion. Binds GTP-bound translation factors.

Its function is as follows. Forms part of the ribosomal stalk which helps the ribosome interact with GTP-bound translation factors. Is thus essential for accurate translation. The protein is Large ribosomal subunit protein bL12 of Crocosphaera subtropica (strain ATCC 51142 / BH68) (Cyanothece sp. (strain ATCC 51142)).